The following is a 345-amino-acid chain: Viral Fc-gamma receptor-like protein UL119 (345 aa).

The first 23 residues, 1–23 (MCSVLAIALVVALLGDMHPGVKS), serve as a signal peptide directing secretion. The tract at residues 23 to 42 (SSTTSAVTSPSNTTVTSTTS) is disordered. Topologically, residues 24-294 (STTSAVTSPS…KSDPLFEDRL (271 aa)) are virion surface. Asn34, Asn48, Asn95, Asn104, Asn148, Asn179, Asn198, Asn217, Asn225, Asn241, Asn244, and Asn260 each carry an N-linked (GlcNAc...) asparagine; by host glycan. In terms of domain architecture, Ig-like V-type spans 91 to 190 (QVSLNATCKV…TWDLFTYPIY (100 aa)). Residues 295–317 (LAYGVLAFLVFMVIILLYVTYML) form a helical membrane-spanning segment. Topologically, residues 318–345 (ARRRDWSYKRLEEPVEEKKHPVPYFKQW) are intravirion.

It is found in the virion membrane. Functionally, serves as a receptor for the Fc part of human IgG. May thus be involved in interfering with host Ig-mediated immune responses. In Human cytomegalovirus (strain AD169) (HHV-5), this protein is Viral Fc-gamma receptor-like protein UL119 (UL119/UL118).